Reading from the N-terminus, the 416-residue chain is Serine hydroxymethyltransferase (416 aa).

(6S)-5,6,7,8-tetrahydrofolate contacts are provided by residues Leu-118 and 122–124 (GHL). An N6-(pyridoxal phosphate)lysine modification is found at Lys-226. 350-352 (SPF) is a binding site for (6S)-5,6,7,8-tetrahydrofolate.

This sequence belongs to the SHMT family. In terms of assembly, homodimer. Requires pyridoxal 5'-phosphate as cofactor.

Its subcellular location is the cytoplasm. The enzyme catalyses (6R)-5,10-methylene-5,6,7,8-tetrahydrofolate + glycine + H2O = (6S)-5,6,7,8-tetrahydrofolate + L-serine. Its pathway is one-carbon metabolism; tetrahydrofolate interconversion. It participates in amino-acid biosynthesis; glycine biosynthesis; glycine from L-serine: step 1/1. Its function is as follows. Catalyzes the reversible interconversion of serine and glycine with tetrahydrofolate (THF) serving as the one-carbon carrier. This reaction serves as the major source of one-carbon groups required for the biosynthesis of purines, thymidylate, methionine, and other important biomolecules. Also exhibits THF-independent aldolase activity toward beta-hydroxyamino acids, producing glycine and aldehydes, via a retro-aldol mechanism. The protein is Serine hydroxymethyltransferase of Sulfurovum sp. (strain NBC37-1).